A 339-amino-acid chain; its full sequence is Tetraacyldisaccharide 4'-kinase (339 aa).

58 to 65 (TVGGSGKT) lines the ATP pocket.

Belongs to the LpxK family.

The catalysed reaction is a lipid A disaccharide + ATP = a lipid IVA + ADP + H(+). It functions in the pathway glycolipid biosynthesis; lipid IV(A) biosynthesis; lipid IV(A) from (3R)-3-hydroxytetradecanoyl-[acyl-carrier-protein] and UDP-N-acetyl-alpha-D-glucosamine: step 6/6. Transfers the gamma-phosphate of ATP to the 4'-position of a tetraacyldisaccharide 1-phosphate intermediate (termed DS-1-P) to form tetraacyldisaccharide 1,4'-bis-phosphate (lipid IVA). The sequence is that of Tetraacyldisaccharide 4'-kinase from Shewanella baltica (strain OS185).